The primary structure comprises 136 residues: MGKDTIADLLTSIRNADMNKKGTVRVVSTNITENIVKILLREGFIESVRKHQESNRYFLVLTLRHQRRKTRKGIYRTRTFLKRISRPGLRIYANYQGIPKVLGGMGIAILSTSRGIMTDREARLNRIGGEVLCYIW.

Belongs to the universal ribosomal protein uS8 family. In terms of assembly, part of the 30S ribosomal subunit.

The protein resides in the plastid. The protein localises to the chloroplast. In terms of biological role, one of the primary rRNA binding proteins, it binds directly to 16S rRNA central domain where it helps coordinate assembly of the platform of the 30S subunit. This is Small ribosomal subunit protein uS8c (rps8) from Saccharum hybrid (Sugarcane).